The primary structure comprises 257 residues: Imidazole glycerol phosphate synthase subunit HisF (257 aa).

Catalysis depends on residues Asp12 and Asp131.

The protein belongs to the HisA/HisF family. As to quaternary structure, heterodimer of HisH and HisF.

It localises to the cytoplasm. The catalysed reaction is 5-[(5-phospho-1-deoxy-D-ribulos-1-ylimino)methylamino]-1-(5-phospho-beta-D-ribosyl)imidazole-4-carboxamide + L-glutamine = D-erythro-1-(imidazol-4-yl)glycerol 3-phosphate + 5-amino-1-(5-phospho-beta-D-ribosyl)imidazole-4-carboxamide + L-glutamate + H(+). Its pathway is amino-acid biosynthesis; L-histidine biosynthesis; L-histidine from 5-phospho-alpha-D-ribose 1-diphosphate: step 5/9. Its function is as follows. IGPS catalyzes the conversion of PRFAR and glutamine to IGP, AICAR and glutamate. The HisF subunit catalyzes the cyclization activity that produces IGP and AICAR from PRFAR using the ammonia provided by the HisH subunit. The polypeptide is Imidazole glycerol phosphate synthase subunit HisF (Saccharophagus degradans (strain 2-40 / ATCC 43961 / DSM 17024)).